The primary structure comprises 441 residues: ATP-dependent protease ATPase subunit HslU (441 aa).

ATP is bound by residues I18 and G60–E65. The disordered stretch occupies residues I131–R158. Residues R140–S152 show a composition bias toward basic and acidic residues. Residues D254, E320, and R392 each coordinate ATP.

The protein belongs to the ClpX chaperone family. HslU subfamily. In terms of assembly, a double ring-shaped homohexamer of HslV is capped on each side by a ring-shaped HslU homohexamer. The assembly of the HslU/HslV complex is dependent on binding of ATP.

It localises to the cytoplasm. Functionally, ATPase subunit of a proteasome-like degradation complex; this subunit has chaperone activity. The binding of ATP and its subsequent hydrolysis by HslU are essential for unfolding of protein substrates subsequently hydrolyzed by HslV. HslU recognizes the N-terminal part of its protein substrates and unfolds these before they are guided to HslV for hydrolysis. The chain is ATP-dependent protease ATPase subunit HslU from Chromohalobacter salexigens (strain ATCC BAA-138 / DSM 3043 / CIP 106854 / NCIMB 13768 / 1H11).